The primary structure comprises 364 residues: MRVLAAMSGGVDSAVAAARAVAAGHDVVGVHLALSAEPGTLRTGSRGCCSKEDAGDARRAADVLGIPFYVWDFADRFKEDVIDDFVASYAAGETPNPCLRCNEKIKFAALADRAIALGFDAVATGHYAQLENGVLRRAVDADKDQSYVLGVLTAEQLSRAMFPVGDTPKDRIREEAAERGLAVANKPDSHDICFIPSGDTRAFLGAHIGVRPGSVVDADSGEVLAEHEGVHGFTIGQRKGLGVQGPAADGQPRYVTSIEPETGTVRVGSARDLEVHAITADRAVWTSGRAPSGPVECTVQVRAHGGLAEAVAEAVDGGIRISLREPLTGVAKGQAAVLYRTDPAGDIVLGSGTISGTDARPNTQ.

Residues 6–13 and leucine 32 each bind ATP; that span reads AMSGGVDS. The active-site Nucleophile is cysteine 101. A disulfide bond links cysteine 101 and cysteine 193. Glycine 125 is an ATP binding site. Residues 143 to 145 are interaction with tRNA; the sequence is KDQ. Cysteine 193 functions as the Cysteine persulfide intermediate in the catalytic mechanism.

It belongs to the MnmA/TRMU family.

The protein resides in the cytoplasm. The catalysed reaction is S-sulfanyl-L-cysteinyl-[protein] + uridine(34) in tRNA + AH2 + ATP = 2-thiouridine(34) in tRNA + L-cysteinyl-[protein] + A + AMP + diphosphate + H(+). Its function is as follows. Catalyzes the 2-thiolation of uridine at the wobble position (U34) of tRNA, leading to the formation of s(2)U34. The chain is tRNA-specific 2-thiouridylase MnmA from Rhodococcus opacus (strain B4).